Here is a 138-residue protein sequence, read N- to C-terminus: Acidic phospholipase A2 homolog sistruxin A (138 aa).

The N-terminal stretch at 1-37 is a signal peptide; it reads MRALWIVAVLLLGVEGSLVEFETLIMKIAGRSGVWYY. 7 disulfide bridges follow: C42–C131, C44–C60, C59–C111, C65–C138, C66–C104, C73–C97, and C91–C102. The propeptide occupies 78–83; it reads DVYTYR. Q84 carries the pyrrolidone carboxylic acid modification. Positions 119-124 are excised as a propeptide; it reads YNHKYW.

It belongs to the phospholipase A2 family. Group II subfamily. D49 sub-subfamily. In terms of assembly, heterodimer of an acidic subunit and a basic chain. The acidic subunit is non-toxic, without enzymatic activity and comprises 3 peptides that are cross-linked by 7 disulfide bridges. The basic subunit is toxic, has phospholipase A2 activity and is composed of a single chain. In terms of tissue distribution, expressed by the venom gland.

It is found in the secreted. Snake venom phospholipase A2 (PLA2) that inhibits neuromuscular transmission by blocking acetylcholine release from the nerve termini. The chain is Acidic phospholipase A2 homolog sistruxin A from Sistrurus tergeminus (Western massasauga).